Reading from the N-terminus, the 200-residue chain is Cell division protein SepF (200 aa).

Disordered regions lie at residues 35–60 (NLYQ…RWRE) and 170–200 (LHEV…RMAQ). Residues 183 to 200 (PTGSPNQTWGNETNRMAQ) show a composition bias toward polar residues.

The protein belongs to the SepF family. As to quaternary structure, homodimer. Interacts with FtsZ.

The protein resides in the cytoplasm. Its function is as follows. Cell division protein that is part of the divisome complex and is recruited early to the Z-ring. Probably stimulates Z-ring formation, perhaps through the cross-linking of FtsZ protofilaments. Its function overlaps with FtsA. The sequence is that of Cell division protein SepF from Nostoc punctiforme (strain ATCC 29133 / PCC 73102).